We begin with the raw amino-acid sequence, 394 residues long: Myb-related protein 2 (394 aa).

Residues 42 to 102 (TDAKPRLKWT…HLQKYRLSKN (61 aa)) form the HTH myb-type domain. Residues 73-98 (PKTIMKVMGIPGLTLYHLKSHLQKYR) constitute a DNA-binding region (H-T-H motif). The tract at residues 148-168 (GEALQMQIEVQRRLHEQLEVQ) is coiled coil. The short motif at 161–166 (LHEQLE) is the LHEQLE element. Residues 338 to 363 (LHGHKSQHQQGNNEDHKLETRNRKGM) are disordered. Residues 350–363 (NEDHKLETRNRKGM) show a composition bias toward basic and acidic residues.

This sequence belongs to the MYB-CC family. Isoform 1: Homodimer. Isoform 3: Does not form homodimer. In terms of tissue distribution, expressed in phloem and/or cambium.

Its subcellular location is the nucleus. Its function is as follows. Transcriptional activator that may activate the transcription of specific genes involved in nitrogen uptake or assimilation. Acts redundantly with MYR1 as a repressor of flowering and organ elongation under decreased light intensity. Represses gibberellic acid (GA)-dependent responses and affects levels of bioactive GA. The chain is Myb-related protein 2 from Arabidopsis thaliana (Mouse-ear cress).